A 133-amino-acid chain; its full sequence is ATP synthase epsilon chain, chloroplastic (133 aa).

This sequence belongs to the ATPase epsilon chain family. In terms of assembly, F-type ATPases have 2 components, CF(1) - the catalytic core - and CF(0) - the membrane proton channel. CF(1) has five subunits: alpha(3), beta(3), gamma(1), delta(1), epsilon(1). CF(0) has three main subunits: a, b and c.

The protein localises to the plastid. Its subcellular location is the chloroplast thylakoid membrane. In terms of biological role, produces ATP from ADP in the presence of a proton gradient across the membrane. This chain is ATP synthase epsilon chain, chloroplastic, found in Psilotum nudum (Whisk fern).